The sequence spans 270 residues: Type III pantothenate kinase (270 aa).

An ATP-binding site is contributed by glutamate 16–methionine 23. Substrate is bound by residues tyrosine 106 and glycine 113 to arginine 116. Aspartate 115 acts as the Proton acceptor in catalysis. Aspartate 136 is a binding site for K(+). Residue threonine 139 coordinates ATP. Threonine 191 serves as a coordination point for substrate.

The protein belongs to the type III pantothenate kinase family. As to quaternary structure, homodimer. NH4(+) serves as cofactor. It depends on K(+) as a cofactor.

It localises to the cytoplasm. It carries out the reaction (R)-pantothenate + ATP = (R)-4'-phosphopantothenate + ADP + H(+). The protein operates within cofactor biosynthesis; coenzyme A biosynthesis; CoA from (R)-pantothenate: step 1/5. Catalyzes the phosphorylation of pantothenate (Pan), the first step in CoA biosynthesis. This chain is Type III pantothenate kinase, found in Chlorobium luteolum (strain DSM 273 / BCRC 81028 / 2530) (Pelodictyon luteolum).